Reading from the N-terminus, the 212-residue chain is Sentrin-specific protease 8 (212 aa).

An N-acetylmethionine modification is found at Met-1. The interval 11–174 (SLLRQSDVSL…MYVICNTEAL (164 aa)) is protease. Residues His-102 and Asp-119 contribute to the active site. Cys-163 (nucleophile) is an active-site residue.

The protein belongs to the peptidase C48 family. In terms of tissue distribution, broadly expressed, with highest levels in kidney and pancreas.

Protease that catalyzes two essential functions in the NEDD8 pathway: processing of full-length NEDD8 to its mature form and deconjugation of NEDD8 from targeted proteins such as cullins or p53. This chain is Sentrin-specific protease 8 (SENP8), found in Homo sapiens (Human).